Here is a 37-residue protein sequence, read N- to C-terminus: Large ribosomal subunit protein bL36 (37 aa).

It belongs to the bacterial ribosomal protein bL36 family.

The protein is Large ribosomal subunit protein bL36 of Cutibacterium acnes (strain DSM 16379 / KPA171202) (Propionibacterium acnes).